Reading from the N-terminus, the 34-residue chain is Phalloidin proprotein (34 aa).

Positions 1-10 (MSDINTTCLP) are excised as a propeptide. The cyclopeptide (Ala-Pro) cross-link spans 11 to 17 (AWLATCP). A cross-link (2'-cysteinyl-6'-hydroxytryptophan sulfoxide (Trp-Cys)) is located at residues 12–16 (WLATC). Positions 18–34 (CTGDDVNPTLTCGESLC) are excised as a propeptide.

Belongs to the MSDIN fungal toxin family. Processed by the macrocyclase-peptidase enzyme POPB to yield a toxic cyclic heptapeptide. POPB first removes 10 residues from the N-terminus. Conformational trapping of the remaining peptide forces the enzyme to release this intermediate rather than proceed to macrocyclization. The enzyme rebinds the remaining peptide in a different conformation and catalyzes macrocyclization of the N-terminal 7 residues.

In terms of biological role, toxin that belongs to the bicyclic heptapeptides called phallotoxins. Although structurally related to amatoxins, phallotoxins have a different mode of action, which is the stabilization of F-actin. Phallotoxins are poisonous when administered parenterally, but not orally because of poor absorption. This Amanita phalloides (Death cap) protein is Phalloidin proprotein.